A 290-amino-acid polypeptide reads, in one-letter code: 4-hydroxybenzoate octaprenyltransferase (290 aa).

The next 6 helical transmembrane spans lie at 38–58 (LAGMAIPALGTLTVFILGVFF), 99–119 (LFGALVGISFALVLTLNSMTI), 141–161 (LPQLVLGAAFGWSIPMVFTAV), 213–233 (LIIGLLQLATLLLLGVIGWQL), 238–258 (IYYLALAGAAGLFLWQQKLIV), and 268–288 (AFLNNNLVGMLIFVGILLSLL).

The protein belongs to the UbiA prenyltransferase family. Requires Mg(2+) as cofactor.

It localises to the cell inner membrane. It catalyses the reaction all-trans-octaprenyl diphosphate + 4-hydroxybenzoate = 4-hydroxy-3-(all-trans-octaprenyl)benzoate + diphosphate. The protein operates within cofactor biosynthesis; ubiquinone biosynthesis. Functionally, catalyzes the prenylation of para-hydroxybenzoate (PHB) with an all-trans polyprenyl group. Mediates the second step in the final reaction sequence of ubiquinone-8 (UQ-8) biosynthesis, which is the condensation of the polyisoprenoid side chain with PHB, generating the first membrane-bound Q intermediate 3-octaprenyl-4-hydroxybenzoate. The protein is 4-hydroxybenzoate octaprenyltransferase of Sodalis glossinidius (strain morsitans).